The primary structure comprises 476 residues: Zinc metalloproteinase/disintegrin (476 aa).

A signal peptide spans 1–20 (MIQVLLVIICLADFPYQGTS). Positions 21 to 184 (IILESGNVND…KSDEPIKASQ (164 aa)) are excised as a propeptide. Gln185 is modified (pyrrolidone carboxylic acid). One can recognise a Peptidase M12B domain in the interval 191 to 387 (RYIELVVVAD…RNPQCILNEP (197 aa)). Ca(2+) contacts are provided by Glu194 and Asp278. Intrachain disulfides connect Cys302–Cys382, Cys342–Cys366, and Cys344–Cys349. Residue His327 participates in Zn(2+) binding. Glu328 is a catalytic residue. Residues His331 and His337 each coordinate Zn(2+). 2 residues coordinate Ca(2+): Cys382 and Asn385. The propeptide occupies 388-403 (LRTDTVSTPVSGNELL). Residues 395–476 (TPVSGNELLE…AGCPRNGFYG (82 aa)) form the Disintegrin domain. 6 cysteine pairs are disulfide-bonded: Cys409–Cys424, Cys411–Cys419, Cys418–Cys441, Cys432–Cys438, Cys437–Cys462, and Cys450–Cys469. The Cell attachment site signature appears at 454–456 (KGD).

The protein belongs to the venom metalloproteinase (M12B) family. P-II subfamily. P-IId sub-subfamily. In terms of assembly, homodimer; disulfide-linked (disintegrin). The cofactor is Zn(2+). Expressed by the venom gland.

The protein resides in the secreted. With respect to regulation, the metalloproteinase is inhibited by EDTA, o-phenanthroline, and cysteine. Glutathione does not inhibit the enzymatic activity. Functionally, shows weak degradation of alpha-fibrinogen, but has no activity on beta- and gamma-chains. Digests luteinizing hormone-releasing hormone (LH-RH) and oxidized insulin at X-Leu, X-Phe, and X-Val bonds as well as X-His bond. Does not show fibrinogen-clotting activity. Does not show hemorrhagic activity. In terms of biological role, inhibits ADP-induced platelet aggregation. The polypeptide is Zinc metalloproteinase/disintegrin (Gloydius brevicauda (Korean slamosa snake)).